Consider the following 312-residue polypeptide: MATSKILLYYAFTPLSDPKAVQLWQRELCESLNLRGRILISTHGINGTVGGDIDDCKAYIKKTREYPGFNRMQFKWSEGGAEDFPKLSVKVRDEIVAFGAPDELKVDENGVVGGGVHLKPQQVNELVEARGDEVVFFDGRNAMEAQIGKFKDAVVPDVETTHDFIAEIESGKYDDLKDKPVVTYCTGGIRCEILSSLMINRGFKEVYQIDGGIVRYGEQFGNKGLWEGSLYVFDKRMHMEFGEDYKEVGHCIHCDTPTNKFEHCLNEDDCRELVLMCPDCFANVETRHCKRERCAAIAADFAEQGIDPLVTS.

The Rhodanese domain maps to 130-225; it reads RGDEVVFFDG…YGEQFGNKGL (96 aa). The active-site Cysteine persulfide intermediate is the cysteine 185.

It belongs to the TrhO family.

The catalysed reaction is uridine(34) in tRNA + AH2 + O2 = 5-hydroxyuridine(34) in tRNA + A + H2O. In terms of biological role, catalyzes oxygen-dependent 5-hydroxyuridine (ho5U) modification at position 34 in tRNAs. This Corynebacterium glutamicum (strain ATCC 13032 / DSM 20300 / JCM 1318 / BCRC 11384 / CCUG 27702 / LMG 3730 / NBRC 12168 / NCIMB 10025 / NRRL B-2784 / 534) protein is tRNA uridine(34) hydroxylase.